The chain runs to 274 residues: MAIHLYKTSTPSTRNGAVDSQVKSNPRNNLIYGQHHCGKGRNARGIITVRHRGGGHKRLYRKIDFRRNAKDIYGRIVTIEYDPNRNAYICLIHYGDGEKRYILHPRGAIIGDTIVSGTEVPIKMGNALPLTDMPLGTAIHNIEITLGKGGQLARAAGAVAKLIAKEGKSATLKLPSGEVRLISKNCSATVGQVGNVGVNQKSLGRAGSKCWLGKRPVVRGVVMNPVDHPHGGGEGRAPIGRKKPVTPWGYPALGRRTRKRKKYSETMILRRRSK.

Disordered regions lie at residues 1–22 (MAIH…DSQV) and 225–252 (PVDH…GYPA).

Belongs to the universal ribosomal protein uL2 family. Part of the 50S ribosomal subunit.

It localises to the plastid. The protein localises to the chloroplast. This is Large ribosomal subunit protein uL2cz/uL2cy (rpl2-A) from Barbarea verna (Land cress).